Here is a 430-residue protein sequence, read N- to C-terminus: Enolase (430 aa).

A (2R)-2-phosphoglycerate-binding site is contributed by glutamine 163. Catalysis depends on glutamate 205, which acts as the Proton donor. Positions 242, 287, and 314 each coordinate Mg(2+). Lysine 339, arginine 368, serine 369, and lysine 390 together coordinate (2R)-2-phosphoglycerate. Residue lysine 339 is the Proton acceptor of the active site.

Belongs to the enolase family. Mg(2+) is required as a cofactor.

It is found in the cytoplasm. The protein localises to the secreted. Its subcellular location is the cell surface. The catalysed reaction is (2R)-2-phosphoglycerate = phosphoenolpyruvate + H2O. It participates in carbohydrate degradation; glycolysis; pyruvate from D-glyceraldehyde 3-phosphate: step 4/5. In terms of biological role, catalyzes the reversible conversion of 2-phosphoglycerate (2-PG) into phosphoenolpyruvate (PEP). It is essential for the degradation of carbohydrates via glycolysis. The sequence is that of Enolase from Exiguobacterium sibiricum (strain DSM 17290 / CCUG 55495 / CIP 109462 / JCM 13490 / 255-15).